The chain runs to 560 residues: MSNKVKSDIEIASKAEILPVTTIAEHLGLDADALELYGKYKAKLSYDTIHSLKDKEPGKLVLVTAINPTPAGEGKSTVTVGLGDALSKKDKKTVIALREPSLGPTMGIKGGATGGGYAQVIPMEDINLHFTGDFHAITAANNALSAFIDNHMQQGNDLEIDGRRIVWKRVVDLNDRALRKVVVGLGGPIQGVPREDGFDITVASEIMAIICLASDLKDLKKRLSEIVIGYNYKKEPITVGEMGYEGALTLLLKDALKPNLVQTLEHTPAIVHGGPFANIAHGCNSVSATSTALRLGDYVVTEAGFGADLGAEKFLDIKVPALGKAPDCVVIVATIRALKMHGGALKTELSEENVDALAKGFTNLQKHTESIQTFGIPYVVAINKFITDSDAEVAKLEALCEEHGIPFSLTEVWEKGGDGGLELADKVIAAVESGAADYKRIYDDAWSMEEKLEAIVTKVYGGIGVELSSKAQKQIVEFKKYGWDRYPICMAKTQYSLSDDPTLLGRPTDFVIHIREFIPKLGAGFVVALTGDVMTMPGLPKKPAALNMDVDENGNAQGLF.

An ATP-binding site is contributed by 69-76 (TPAGEGKS).

This sequence belongs to the formate--tetrahydrofolate ligase family.

It catalyses the reaction (6S)-5,6,7,8-tetrahydrofolate + formate + ATP = (6R)-10-formyltetrahydrofolate + ADP + phosphate. It participates in one-carbon metabolism; tetrahydrofolate interconversion. This chain is Formate--tetrahydrofolate ligase, found in Listeria monocytogenes serovar 1/2a (strain ATCC BAA-679 / EGD-e).